A 488-amino-acid polypeptide reads, in one-letter code: Pup--protein ligase (488 aa).

E33 is a binding site for Mg(2+). An ATP-binding site is contributed by R76. Y78 serves as a coordination point for Mg(2+). D80 acts as the Proton acceptor in catalysis. E86 is a Mg(2+) binding site. Residues T89 and W453 each coordinate ATP.

It belongs to the Pup ligase/Pup deamidase family. Pup-conjugating enzyme subfamily.

The catalysed reaction is ATP + [prokaryotic ubiquitin-like protein]-L-glutamate + [protein]-L-lysine = ADP + phosphate + N(6)-([prokaryotic ubiquitin-like protein]-gamma-L-glutamyl)-[protein]-L-lysine.. It functions in the pathway protein degradation; proteasomal Pup-dependent pathway. Its pathway is protein modification; protein pupylation. Its function is as follows. Catalyzes the covalent attachment of the prokaryotic ubiquitin-like protein modifier Pup to the proteasomal substrate proteins, thereby targeting them for proteasomal degradation. This tagging system is termed pupylation. The ligation reaction involves the side-chain carboxylate of the C-terminal glutamate of Pup and the side-chain amino group of a substrate lysine. This chain is Pup--protein ligase, found in Bifidobacterium adolescentis (strain ATCC 15703 / DSM 20083 / NCTC 11814 / E194a).